The chain runs to 184 residues: Dirigent protein 13 (184 aa).

The signal sequence occupies residues 1 to 25; it reads MANQIYIISLIFLSVLLYQSTTVLS. C36 and C182 are disulfide-bonded. N-linked (GlcNAc...) asparagine glycans are attached at residues N55 and N119.

The protein belongs to the plant dirigent protein family. In terms of assembly, homodimer. Expressed in root vasculature and meristems, cotyledons, flowers, siliques, and leaf trichomes. Localized in the interfascicular/vascular cambia and developing xylem.

The protein resides in the secreted. Its subcellular location is the extracellular space. The protein localises to the apoplast. In terms of biological role, dirigent proteins impart stereoselectivity on the phenoxy radical-coupling reaction, yielding optically active lignans from two molecules of coniferyl alcohol in the biosynthesis of lignans, flavonolignans, and alkaloids and thus plays a central role in plant secondary metabolism. In Arabidopsis thaliana (Mouse-ear cress), this protein is Dirigent protein 13 (DIR13).